We begin with the raw amino-acid sequence, 97 residues long: Single insulin-like growth factor-binding domain protein-1 (97 aa).

Residues 1 to 19 (MKTLFVFAVGIMLSMRASA) form the signal peptide. Residues 20-96 (FTCPECRPEL…PEIVGTCVKI (77 aa)) enclose the IGFBP N-terminal domain. A glycan (O-linked (GalNAc...) threonine) is linked at Thr21. Disulfide bonds link Cys22-Cys45, Cys25-Cys47, Cys30-Cys48, Cys36-Cys51, Cys59-Cys75, and Cys69-Cys93.

Expressed in hemocytes.

It localises to the secreted. Functionally, has a role in the innate immune system. In Cupiennius salei (American wandering spider), this protein is Single insulin-like growth factor-binding domain protein-1.